The chain runs to 375 residues: Holliday junction branch migration complex subunit RuvB (375 aa).

The disordered stretch occupies residues 1–50 (MAIVSSKSPDPAERRSQAKTKPSVSEPQDSLVRPQAAPEESQRPEDQIRP). Residues 13–209 (ERRSQAKTKP…FGLVQRLRFY (197 aa)) form a large ATPase domain (RuvB-L) region. Positions 19 to 28 (KTKPSVSEPQ) are enriched in polar residues. The span at 40–49 (ESQRPEDQIR) shows a compositional bias: basic and acidic residues. ATP contacts are provided by residues isoleucine 48, arginine 49, glycine 90, lysine 93, threonine 94, threonine 95, 156 to 158 (EDF), arginine 199, tyrosine 209, and arginine 246. Threonine 94 serves as a coordination point for Mg(2+). Residues 210–280 (EVEALTDIVQ…IAATALELYN (71 aa)) form a small ATPAse domain (RuvB-S) region. The tract at residues 283 to 375 (PCGLDWTDRR…LQQLLTEPET (93 aa)) is head domain (RuvB-H). Residues arginine 338 and arginine 343 each contribute to the DNA site.

Belongs to the RuvB family. Homohexamer. Forms an RuvA(8)-RuvB(12)-Holliday junction (HJ) complex. HJ DNA is sandwiched between 2 RuvA tetramers; dsDNA enters through RuvA and exits via RuvB. An RuvB hexamer assembles on each DNA strand where it exits the tetramer. Each RuvB hexamer is contacted by two RuvA subunits (via domain III) on 2 adjacent RuvB subunits; this complex drives branch migration. In the full resolvosome a probable DNA-RuvA(4)-RuvB(12)-RuvC(2) complex forms which resolves the HJ.

The protein localises to the cytoplasm. The enzyme catalyses ATP + H2O = ADP + phosphate + H(+). In terms of biological role, the RuvA-RuvB-RuvC complex processes Holliday junction (HJ) DNA during genetic recombination and DNA repair, while the RuvA-RuvB complex plays an important role in the rescue of blocked DNA replication forks via replication fork reversal (RFR). RuvA specifically binds to HJ cruciform DNA, conferring on it an open structure. The RuvB hexamer acts as an ATP-dependent pump, pulling dsDNA into and through the RuvAB complex. RuvB forms 2 homohexamers on either side of HJ DNA bound by 1 or 2 RuvA tetramers; 4 subunits per hexamer contact DNA at a time. Coordinated motions by a converter formed by DNA-disengaged RuvB subunits stimulates ATP hydrolysis and nucleotide exchange. Immobilization of the converter enables RuvB to convert the ATP-contained energy into a lever motion, pulling 2 nucleotides of DNA out of the RuvA tetramer per ATP hydrolyzed, thus driving DNA branch migration. The RuvB motors rotate together with the DNA substrate, which together with the progressing nucleotide cycle form the mechanistic basis for DNA recombination by continuous HJ branch migration. Branch migration allows RuvC to scan DNA until it finds its consensus sequence, where it cleaves and resolves cruciform DNA. The protein is Holliday junction branch migration complex subunit RuvB of Synechococcus elongatus (strain ATCC 33912 / PCC 7942 / FACHB-805) (Anacystis nidulans R2).